Here is a 97-residue protein sequence, read N- to C-terminus: MKIRPLHDRVIVKRKEVESKSAGGIVLTGTAAGKSTRGEVLPVGNGRILDNGEIKPLDVKVGDIVIFNDGYGVKSEKIDHEEVLIMSESDILAIVEA.

Belongs to the GroES chaperonin family. Heptamer of 7 subunits arranged in a ring. Interacts with the chaperonin GroEL.

The protein localises to the cytoplasm. Its function is as follows. Together with the chaperonin GroEL, plays an essential role in assisting protein folding. The GroEL-GroES system forms a nano-cage that allows encapsulation of the non-native substrate proteins and provides a physical environment optimized to promote and accelerate protein folding. GroES binds to the apical surface of the GroEL ring, thereby capping the opening of the GroEL channel. This Yersinia enterocolitica protein is Co-chaperonin GroES.